The primary structure comprises 511 residues: Exodeoxyribonuclease 7 large subunit (511 aa).

This sequence belongs to the XseA family. Heterooligomer composed of large and small subunits.

It localises to the cytoplasm. It carries out the reaction Exonucleolytic cleavage in either 5'- to 3'- or 3'- to 5'-direction to yield nucleoside 5'-phosphates.. Bidirectionally degrades single-stranded DNA into large acid-insoluble oligonucleotides, which are then degraded further into small acid-soluble oligonucleotides. This Brucella melitensis biotype 2 (strain ATCC 23457) protein is Exodeoxyribonuclease 7 large subunit.